We begin with the raw amino-acid sequence, 326 residues long: Putative cell agglutination protein pfl9 (326 aa).

The N-terminal stretch at 1-21 (MNVVKYIIFSFALAPLLLVNA) is a signal peptide. N-linked (GlcNAc...) asparagine glycosylation occurs at Asn25. Repeat copies occupy residues 103 to 137 (STIT…IPTA) and 138 to 175 (GTFT…TPSC). Residues 103 to 175 (STITTTITSG…GEVEVITPSC (73 aa)) form a 2 X 36 AA approximate tandem repeats region. A DIPSY domain is found at 164-326 (QSGEVEVITP…RANDVTLQLY (163 aa)).

This sequence belongs to the mam3/map4 family.

Its subcellular location is the cell surface. May be involved in agglutination during conjugation or other aspects of colony formation. Induces flocculation when overexpressed. The chain is Putative cell agglutination protein pfl9 from Schizosaccharomyces pombe (strain 972 / ATCC 24843) (Fission yeast).